The following is a 435-amino-acid chain: GTPase Obg (435 aa).

The 159-residue stretch at 1 to 159 folds into the Obg domain; it reads MAFIDKCKIV…VEVLLELKTI (159 aa). In terms of domain architecture, OBG-type G spans 160–329; it reads ADIGIIGLPN…MLDDVIKIYF (170 aa). Residues 166–173, 191–195, 212–215, 282–285, and 310–312 contribute to the GTP site; these read GLPNAGKS, FTTLN, DIPG, NKID, and SAL. Positions 173 and 193 each coordinate Mg(2+). An OCT domain is found at 357–435; sequence KSKELDKTIE…IYDITLEFEE (79 aa).

This sequence belongs to the TRAFAC class OBG-HflX-like GTPase superfamily. OBG GTPase family. Monomer. Mg(2+) is required as a cofactor.

It is found in the cytoplasm. Its function is as follows. An essential GTPase which binds GTP, GDP and possibly (p)ppGpp with moderate affinity, with high nucleotide exchange rates and a fairly low GTP hydrolysis rate. Plays a role in control of the cell cycle, stress response, ribosome biogenesis and in those bacteria that undergo differentiation, in morphogenesis control. The sequence is that of GTPase Obg from Ureaplasma parvum serovar 3 (strain ATCC 27815 / 27 / NCTC 11736).